Consider the following 698-residue polypeptide: Elongation factor G 1 (698 aa).

The tr-type G domain maps to 8–290; that stretch reads ERYRNIGIVA…AVVDYLPAPI (283 aa). Residues 17–24, 88–92, and 142–145 each bind GTP; these read AHVDAGKT, DTPGH, and NKMD.

The protein belongs to the TRAFAC class translation factor GTPase superfamily. Classic translation factor GTPase family. EF-G/EF-2 subfamily.

The protein resides in the cytoplasm. In terms of biological role, catalyzes the GTP-dependent ribosomal translocation step during translation elongation. During this step, the ribosome changes from the pre-translocational (PRE) to the post-translocational (POST) state as the newly formed A-site-bound peptidyl-tRNA and P-site-bound deacylated tRNA move to the P and E sites, respectively. Catalyzes the coordinated movement of the two tRNA molecules, the mRNA and conformational changes in the ribosome. This Shewanella denitrificans (strain OS217 / ATCC BAA-1090 / DSM 15013) protein is Elongation factor G 1.